Here is a 162-residue protein sequence, read N- to C-terminus: Autophagy-related protein 8 (162 aa).

Residues 1–27 (MRSKFKDEHPFEKRKAEAERIRQKYSD) show a composition bias toward basic and acidic residues. A disordered region spans residues 1-42 (MRSKFKDEHPFEKRKAEAERIRQKYSDRIPPSPHSPASRLIG). A lipid anchor (Phosphatidylethanolamine amidated glycine) is attached at Gly-157. A propeptide spans 158–162 (GFETA) (removed in mature form).

Belongs to the ATG8 family.

It is found in the cytoplasmic vesicle. Its subcellular location is the autophagosome membrane. The protein localises to the vacuole membrane. Ubiquitin-like modifier involved in autophagosome formation. With ATG4, mediates the delivery of the autophagosomes to the vacuole via the microtubule cytoskeleton. Required for selective autophagic degradation of the nucleus (nucleophagy) as well as for mitophagy which contributes to regulate mitochondrial quantity and quality by eliminating the mitochondria to a basal level to fulfill cellular energy requirements and preventing excess ROS production. Also participates in membrane fusion events that take place in the early secretory pathway. Also involved in endoplasmic reticulum-specific autophagic process and is essential for the survival of cells subjected to severe ER stress. The ATG8-PE conjugate mediates tethering between adjacent membranes and stimulates membrane hemifusion, leading to expansion of the autophagosomal membrane during autophagy. The polypeptide is Autophagy-related protein 8 (Colletotrichum higginsianum (strain IMI 349063) (Crucifer anthracnose fungus)).